Here is a 4568-residue protein sequence, read N- to C-terminus: Dynein heavy chain, cytoplasmic (4568 aa).

Residues 1–1826 (MDSGNESSII…VVKMANSQFF (1826 aa)) are stem. Coiled coils occupy residues 587–652 (QTRL…VLGK), 814–844 (KLAE…NVLK), 1241–1274 (QEAL…LDLS), 1324–1340 (RKIR…LKQL), and 1559–1591 (VNMQ…RERS). AAA regions lie at residues 1827–2049 (YGFE…VLVS), 2118–2394 (QQLS…PTPQ), 2498–2747 (EIES…WVRG), and 2842–3111 (GFYE…GHRV). Residues 1865-1872 (GPAGTGKT), 2163-2170 (GSSGSGKT), 2537-2544 (GPPGSGKT), and 2880-2887 (GTAGAGKT) each bind ATP. 3 coiled-coil regions span residues 3132-3229 (EKRS…AQVE), 3339-3432 (ARAQ…RDRW), and 3707-3739 (NSVI…EVDA). The segment at 3132–3432 (EKRSDLEEEK…SSLRSERDRW (301 aa)) is stalk. AAA regions lie at residues 3496–3725 (LSTV…EVAQ) and 3954–4169 (AHRV…TLDA). Residues 4359-4386 (QLLKDIRRDLNEISAVCRAEKKQNNETR) adopt a coiled-coil conformation.

The protein belongs to the dynein heavy chain family. In terms of assembly, consists of at least two heavy chains and a number of intermediate and light chains.

It is found in the cytoplasm. The protein resides in the cytoskeleton. Functionally, cytoplasmic dynein acts as a motor for the intracellular retrograde motility of vesicles and organelles along microtubules. Dynein has ATPase activity; the force-producing power stroke is thought to occur on release of ADP. May play a role in nuclear migration in hypodermal precursor cells. May be involved in the transport of synaptic vesicle components towards the axon of the DA motor neuron. This function may involve the regulation of dynein by pct-1 and/or cdk-5. Involved in the formation of synapses in the dorsal region during synaptic remodeling of DD motor neurons. Required for anterograde trafficking of dense-core vesicles in the DB motor neuron dendrites. Required for the formation of dendritic branches of PVD sensory neurons. May also play a role in GABAergic synaptic vesicle localization in the ventral nerve cord. May play a role in the pairing of homologous chromosomes during meiosis. The polypeptide is Dynein heavy chain, cytoplasmic (Caenorhabditis elegans).